Reading from the N-terminus, the 138-residue chain is uncharacterized protein (138 aa).

Residues 74–96 form a disordered region; the sequence is RRRSPSLPARRPPTPREDALEDY. Residues 87-96 are compositionally biased toward basic and acidic residues; that stretch reads TPREDALEDY.

This is an uncharacterized protein from Orgyia pseudotsugata (Douglas-fir tussock moth).